The following is a 387-amino-acid chain: Short-chain dehydrogenase/reductase family 42E member 1 (387 aa).

Tyr-149 serves as the catalytic Proton acceptor. Lys-153 lines the NAD(+) pocket. The next 2 helical transmembrane spans lie at 279-299 (LPISMIYFFAFLTEMVHFVVG) and 365-385 (ILDVFVVVAFVAVLLSCLPVV).

The protein belongs to the 3-beta-HSD family.

Its subcellular location is the membrane. The protein is Short-chain dehydrogenase/reductase family 42E member 1 (sdr42e1) of Danio rerio (Zebrafish).